Consider the following 309-residue polypeptide: Methionyl-tRNA formyltransferase (309 aa).

110–113 contacts (6S)-5,6,7,8-tetrahydrofolate; sequence SLLP.

The protein belongs to the Fmt family.

It carries out the reaction L-methionyl-tRNA(fMet) + (6R)-10-formyltetrahydrofolate = N-formyl-L-methionyl-tRNA(fMet) + (6S)-5,6,7,8-tetrahydrofolate + H(+). Functionally, attaches a formyl group to the free amino group of methionyl-tRNA(fMet). The formyl group appears to play a dual role in the initiator identity of N-formylmethionyl-tRNA by promoting its recognition by IF2 and preventing the misappropriation of this tRNA by the elongation apparatus. In Caldanaerobacter subterraneus subsp. tengcongensis (strain DSM 15242 / JCM 11007 / NBRC 100824 / MB4) (Thermoanaerobacter tengcongensis), this protein is Methionyl-tRNA formyltransferase.